We begin with the raw amino-acid sequence, 405 residues long: Cytochrome P450 130 (405 aa).

Residues Asp-93 and His-97 each contribute to the substrate site. Heme is bound by residues Arg-101, Gly-243, Arg-295, Tyr-318, Ser-348, His-352, and Cys-354.

Belongs to the cytochrome P450 family. Homodimer. Heme serves as cofactor.

This is Cytochrome P450 130 (cyp130) from Mycobacterium tuberculosis (strain CDC 1551 / Oshkosh).